The primary structure comprises 277 residues: Large ribosomal subunit protein uL2 (277 aa).

Residues 222–277 (GVAMNPVDHPHGGGEGRTSGGRHPVTPWGKPTKGKKTRSNKATDKFIMRSRHQRKK) form a disordered region.

The protein belongs to the universal ribosomal protein uL2 family. In terms of assembly, part of the 50S ribosomal subunit. Forms a bridge to the 30S subunit in the 70S ribosome.

Its function is as follows. One of the primary rRNA binding proteins. Required for association of the 30S and 50S subunits to form the 70S ribosome, for tRNA binding and peptide bond formation. It has been suggested to have peptidyltransferase activity; this is somewhat controversial. Makes several contacts with the 16S rRNA in the 70S ribosome. The protein is Large ribosomal subunit protein uL2 of Brucella abortus (strain S19).